A 151-amino-acid chain; its full sequence is Ribosome maturation factor RimP (151 aa).

This sequence belongs to the RimP family.

It localises to the cytoplasm. In terms of biological role, required for maturation of 30S ribosomal subunits. The polypeptide is Ribosome maturation factor RimP (Photobacterium profundum (strain SS9)).